Reading from the N-terminus, the 609-residue chain is Glutamine--fructose-6-phosphate aminotransferase [isomerizing] (609 aa).

Cys-2 functions as the Nucleophile; for GATase activity in the catalytic mechanism. The Glutamine amidotransferase type-2 domain maps to 2-218 (CGIVGAVAQR…EGDIAEVTRR (217 aa)). SIS domains are found at residues 286–426 (AAKL…LKGV) and 458–599 (LAED…VDQP). The For Fru-6P isomerization activity role is filled by Lys-604.

Homodimer.

The protein localises to the cytoplasm. The catalysed reaction is D-fructose 6-phosphate + L-glutamine = D-glucosamine 6-phosphate + L-glutamate. Its function is as follows. Catalyzes the first step in hexosamine metabolism, converting fructose-6P into glucosamine-6P using glutamine as a nitrogen source. This Photorhabdus laumondii subsp. laumondii (strain DSM 15139 / CIP 105565 / TT01) (Photorhabdus luminescens subsp. laumondii) protein is Glutamine--fructose-6-phosphate aminotransferase [isomerizing].